The sequence spans 200 residues: Charged multivesicular body protein 6 (200 aa).

A lipid anchor (N-myristoyl glycine) is attached at glycine 2. Positions 10–94 form a coiled coil; the sequence is RSRVTEQDKA…ERMVQDIEFT (85 aa). Residues 168-179 carry the Type-2 MIT-interacting motif motif; the sequence is LELPDVPSEPLP. Positions 169 to 200 are disordered; sequence ELPDVPSEPLPEEPPEATPVKNRPKPELVAAS.

This sequence belongs to the SNF7 family. Probable core component of the endosomal sorting required for transport complex III (ESCRT-III). ESCRT-III components are thought to multimerize to form a flat lattice on the perimeter membrane of the endosome.

The protein resides in the endomembrane system. It localises to the late endosome membrane. Probable core component of the endosomal sorting required for transport complex III (ESCRT-III) which is involved in multivesicular bodies (MVBs) formation and sorting of endosomal cargo proteins into MVBs. MVBs contain intraluminal vesicles (ILVs) that are generated by invagination and scission from the limiting membrane of the endosome and mostly are delivered to lysosomes enabling degradation of membrane proteins, such as stimulated growth factor receptors, lysosomal enzymes and lipids. In the ESCRT-III complex, it probably serves as an acceptor for the ESCRT-II complex on endosomal membranes. This is Charged multivesicular body protein 6 (CHMP6) from Gallus gallus (Chicken).